The following is an 89-amino-acid chain: Endoribonuclease VapD 1 (89 aa).

The protein belongs to the VapD ribonuclease family. In terms of assembly, homodimer.

In terms of biological role, cleaves ssRNA, mostly between U:A. This Riemerella anatipestifer (Moraxella anatipestifer) protein is Endoribonuclease VapD 1.